Here is a 366-residue protein sequence, read N- to C-terminus: Anhydro-N-acetylmuramic acid kinase (366 aa).

12-19 (GTSMDGAD) serves as a coordination point for ATP.

It belongs to the anhydro-N-acetylmuramic acid kinase family.

It carries out the reaction 1,6-anhydro-N-acetyl-beta-muramate + ATP + H2O = N-acetyl-D-muramate 6-phosphate + ADP + H(+). The protein operates within amino-sugar metabolism; 1,6-anhydro-N-acetylmuramate degradation. It participates in cell wall biogenesis; peptidoglycan recycling. In terms of biological role, catalyzes the specific phosphorylation of 1,6-anhydro-N-acetylmuramic acid (anhMurNAc) with the simultaneous cleavage of the 1,6-anhydro ring, generating MurNAc-6-P. Is required for the utilization of anhMurNAc either imported from the medium or derived from its own cell wall murein, and thus plays a role in cell wall recycling. This is Anhydro-N-acetylmuramic acid kinase from Neisseria meningitidis serogroup C (strain 053442).